Consider the following 98-residue polypeptide: NADH-ubiquinone oxidoreductase chain 4L (98 aa).

Helical transmembrane passes span 2–22, 29–49, and 61–81; these read PSIS…MLIF, SLLC…LTIL, and ILLL…LVTV.

This sequence belongs to the complex I subunit 4L family. As to quaternary structure, core subunit of respiratory chain NADH dehydrogenase (Complex I) which is composed of 45 different subunits.

The protein resides in the mitochondrion inner membrane. The catalysed reaction is a ubiquinone + NADH + 5 H(+)(in) = a ubiquinol + NAD(+) + 4 H(+)(out). In terms of biological role, core subunit of the mitochondrial membrane respiratory chain NADH dehydrogenase (Complex I) which catalyzes electron transfer from NADH through the respiratory chain, using ubiquinone as an electron acceptor. Part of the enzyme membrane arm which is embedded in the lipid bilayer and involved in proton translocation. The sequence is that of NADH-ubiquinone oxidoreductase chain 4L (MT-ND4L) from Lemur catta (Ring-tailed lemur).